The following is a 509-amino-acid chain: Maturase K (509 aa).

Belongs to the intron maturase 2 family. MatK subfamily.

It is found in the plastid. The protein resides in the chloroplast. Usually encoded in the trnK tRNA gene intron. Probably assists in splicing its own and other chloroplast group II introns. The polypeptide is Maturase K (Drimys granadensis).